Consider the following 208-residue polypeptide: Large ribosomal subunit protein bL25 (208 aa).

Residues 178–208 (LPPQQSEVPEPDSEEEPKEPEAIKEKDNDGE) form a disordered region. Residues 186-195 (PEPDSEEEPK) show a composition bias toward acidic residues. Basic and acidic residues predominate over residues 196–208 (EPEAIKEKDNDGE).

This sequence belongs to the bacterial ribosomal protein bL25 family. CTC subfamily. In terms of assembly, part of the 50S ribosomal subunit; part of the 5S rRNA/L5/L18/L25 subcomplex. Contacts the 5S rRNA. Binds to the 5S rRNA independently of L5 and L18.

In terms of biological role, this is one of the proteins that binds to the 5S RNA in the ribosome where it forms part of the central protuberance. The chain is Large ribosomal subunit protein bL25 from Bacillus pumilus (strain SAFR-032).